The following is a 149-amino-acid chain: Large ribosomal subunit protein bL9 (149 aa).

It belongs to the bacterial ribosomal protein bL9 family.

In terms of biological role, binds to the 23S rRNA. The sequence is that of Large ribosomal subunit protein bL9 from Salmonella dublin (strain CT_02021853).